The following is a 361-amino-acid chain: POU domain, class 3, transcription factor 4 (361 aa).

2 disordered regions span residues 99–131 (PHVA…GQPL) and 144–192 (MLEH…PTSD). Polar residues predominate over residues 122–131 (PSITSSGQPL). Residues 165–183 (VLREPPDHGELGSHHCQDH) are compositionally biased toward basic and acidic residues. A POU-specific domain is found at 186-260 (EETPTSDELE…LLNKWLEEAD (75 aa)). Serine 265 carries the post-translational modification Phosphoserine. A DNA-binding region (homeobox) is located at residues 278–337 (KRKKRTSIEVSVKGVLETHFLKCPKPAAQEISSLADSLQLEKEVVRVWFCNRRQKEKRMT).

It belongs to the POU transcription factor family. Class-3 subfamily. As to quaternary structure, interacts with HNRNPU. In terms of tissue distribution, brain specific.

The protein localises to the nucleus. Probable transcription factor which exert its primary action widely during early neural development and in a very limited set of neurons in the mature brain. This is POU domain, class 3, transcription factor 4 (POU3F4) from Homo sapiens (Human).